A 567-amino-acid chain; its full sequence is Protein ESMERALDA 1 (567 aa).

Residues 1–41 (MLAKNRLPGSGHTTPSPPASPRRSPRYRHGRSKAAAGSRFP) form a disordered region. Over 1–65 (MLAKNRLPGS…ILLSVLLRRQ (65 aa)) the chain is Cytoplasmic. The segment covering 23-32 (RSPRYRHGRS) has biased composition (basic residues). Residues 66–86 (GIFLFAPLIYISCMLLYMGTV) form a helical; Signal-anchor for type II membrane protein membrane-spanning segment. Residues 87-567 (SFDVVPIIQR…TPESRPPPAT (481 aa)) lie on the Lumenal side of the membrane. 4 N-linked (GlcNAc...) asparagine glycosylation sites follow: Asn-121, Asn-145, Asn-184, and Asn-238. A substrate-binding site is contributed by 331 to 333 (HLR). N-linked (GlcNAc...) asparagine glycosylation is found at Asn-403, Asn-419, Asn-449, Asn-538, and Asn-554.

This sequence belongs to the glycosyltransferase GT106 family. In terms of tissue distribution, ubiquitous.

It is found in the golgi apparatus membrane. It functions in the pathway protein modification; protein glycosylation. In terms of biological role, glycosyltransferase that plays a role in cell adhesion. The protein is Protein ESMERALDA 1 of Arabidopsis thaliana (Mouse-ear cress).